A 192-amino-acid chain; its full sequence is NADH-quinone oxidoreductase subunit B (192 aa).

Residues C71, C72, C136, and C166 each contribute to the [4Fe-4S] cluster site.

It belongs to the complex I 20 kDa subunit family. In terms of assembly, NDH-1 is composed of 14 different subunits. Subunits NuoB, C, D, E, F, and G constitute the peripheral sector of the complex. The cofactor is [4Fe-4S] cluster.

Its subcellular location is the cell inner membrane. It carries out the reaction a quinone + NADH + 5 H(+)(in) = a quinol + NAD(+) + 4 H(+)(out). Functionally, NDH-1 shuttles electrons from NADH, via FMN and iron-sulfur (Fe-S) centers, to quinones in the respiratory chain. The immediate electron acceptor for the enzyme in this species is believed to be ubiquinone. Couples the redox reaction to proton translocation (for every two electrons transferred, four hydrogen ions are translocated across the cytoplasmic membrane), and thus conserves the redox energy in a proton gradient. This is NADH-quinone oxidoreductase subunit B from Sinorhizobium medicae (strain WSM419) (Ensifer medicae).